Here is a 1038-residue protein sequence, read N- to C-terminus: Ubiquitin carboxyl-terminal hydrolase 36 (1038 aa).

2 disordered regions span residues 22-44 and 107-148; these read LGGN…TNGS and ANGH…PKPK. Residues 23-44 are compositionally biased toward polar residues; that stretch reads GGNSSAGSSTDQAKSGEDTNGS. The region spanning 172–480 is the USP domain; that stretch reads TGMINVGNTC…NAYIMFFELD (309 aa). Cysteine 181 functions as the Nucleophile in the catalytic mechanism. Histidine 439 (proton acceptor) is an active-site residue. 4 disordered regions span residues 487–794, 818–881, 912–985, and 1000–1038; these read PAAN…SKTG, GSPV…SNGS, LLVD…YNQN, and RFGG…QQQT. 3 stretches are compositionally biased toward low complexity: residues 502–517, 546–559, and 587–606; these read STTP…PSPT, QQNQ…LQLG, and NGNK…KSIN. 2 positions are modified to phosphoserine: serine 513 and serine 515. Over residues 629-641 the composition is skewed to polar residues; the sequence is TTAQLPSMPNMTE. Residues threonine 658 and threonine 662 each carry the phosphothreonine modification. Residues serine 672 and serine 674 each carry the phosphoserine modification. Residues 703 to 728 show a composition bias toward polar residues; that stretch reads TNGHSKTNGSHTNGSASSSVHVNNSK. Positions 729–746 are enriched in basic and acidic residues; the sequence is QKTDAIDEIFKSLKKSAD. Residue serine 747 is modified to Phosphoserine. Positions 747-756 are enriched in acidic residues; the sequence is SDEDDDEEEP. Residues 766–776 are compositionally biased toward low complexity; the sequence is PQKQSQSQSKA. Pro residues predominate over residues 777–786; the sequence is PPSPKTPPSP. Position 779 is a phosphoserine (serine 779). Position 782 is a phosphothreonine (threonine 782). Phosphoserine is present on residues serine 785 and serine 819. Threonine 825 carries the post-translational modification Phosphothreonine. Over residues 832-844 the composition is skewed to polar residues; that stretch reads NPFSSSKPSTDSP. Phosphoserine is present on serine 843. The residue at position 846 (threonine 846) is a Phosphothreonine. Residues 859–881 are compositionally biased toward polar residues; the sequence is ALKSHQQPRVGNGYQSNATSNGS. Basic and acidic residues predominate over residues 912 to 923; sequence LLVDAREQRQRD. Positions 942 to 953 are enriched in low complexity; sequence SGSAKGNNASNS.

The protein belongs to the peptidase C19 family. As to quaternary structure, interacts with atms/PAF1, but not with CycT. Interacts (via C-terminus) with imd (via N-terminus).

Its subcellular location is the nucleus. The protein localises to the nucleolus. It is found in the cytoplasm. It catalyses the reaction Thiol-dependent hydrolysis of ester, thioester, amide, peptide and isopeptide bonds formed by the C-terminal Gly of ubiquitin (a 76-residue protein attached to proteins as an intracellular targeting signal).. In terms of biological role, hydrolase that deubiquitinates polyubiquitinated target proteins including imd. Required for preventing the constitutive activation of the imd/NF-kappa-B (Imd) signaling cascade under unchalleneged conditions. Deubiquitinates imd linked 'Lys-63' chains which leads its proteasomal degradation and consequently down-regulation of the Imd signaling cascade. Removal of the activating 'Lys-63'-linked chains is likely to enable their replacement with 'Lys-48'-linked chains which act as 'tags' the for proteasomal degradation of imd. Required for maintaining multiple types of adult stem cells, including male and female germline, epithelial follicle cell and intestinal stem cells. May function as a transcriptional repressor by continually deubiquiting histone H2B at the promoters of genes critical for cellular differentiation, thereby preventing histone H3 'Lys-4' trimethylation (H3K4me3). Controls selective autophagy activation by ubiquitinated proteins. The sequence is that of Ubiquitin carboxyl-terminal hydrolase 36 (scny) from Drosophila melanogaster (Fruit fly).